The chain runs to 533 residues: Flavin-containing monooxygenase 5 (533 aa).

Position 5 is a dimethylated arginine (Arg5). FAD is bound by residues 10-14 (GSGAS), Glu33, and 41-42 (LW). Ser54 bears the Phosphoserine mark. Tyr56 carries the post-translational modification Phosphotyrosine. Position 58 is a phosphoserine (Ser58). 62–63 (NT) provides a ligand contact to FAD. 196-199 (SGGD) serves as a coordination point for NADP(+). Thr284 carries the phosphothreonine modification. A Phosphoserine modification is found at Ser401. Residues 513–533 (LVTVRVLMLAVTFLAVILAYF) form a helical membrane-spanning segment.

The protein belongs to the FMO family. The cofactor is FAD.

The protein resides in the microsome membrane. It is found in the endoplasmic reticulum membrane. The enzyme catalyses N,N-dimethylaniline + NADPH + O2 + H(+) = N,N-dimethylaniline N-oxide + NADP(+) + H2O. It carries out the reaction NADPH + O2 + H(+) = H2O2 + NADP(+). The catalysed reaction is heptan-2-one + NADPH + O2 + H(+) = pentyl acetate + NADP(+) + H2O. It catalyses the reaction octan-3-one + NADPH + O2 + H(+) = pentyl propanoate + NADP(+) + H2O. The enzyme catalyses octan-3-one + NADPH + O2 + H(+) = ethyl hexanoate + NADP(+) + H2O. It carries out the reaction hexan-3-one + NADPH + O2 + H(+) = ethyl butanoate + NADP(+) + H2O. The catalysed reaction is hexan-3-one + NADPH + O2 + H(+) = propyl propanoate + NADP(+) + H2O. It catalyses the reaction heptan-4-one + NADPH + O2 + H(+) = propyl butanoate + NADP(+) + H2O. The enzyme catalyses (2E)-geranial + NADPH + O2 + H(+) = (1E)-2,6-dimethylhepta-1,5-dien-1-yl formate + NADP(+) + H2O. It carries out the reaction sulcatone + NADPH + O2 + H(+) = 4-methylpent-3-en-1-yl acetate + NADP(+) + H2O. Its function is as follows. Acts as a Baeyer-Villiger monooxygenase on a broad range of substrates. Catalyzes the insertion of an oxygen atom into a carbon-carbon bond adjacent to a carbonyl, which converts ketones to esters. Active on diverse carbonyl compounds, whereas soft nucleophiles are mostly non- or poorly reactive. In contrast with other forms of FMO it is non- or poorly active on 'classical' substrates such as drugs, pesticides, and dietary components containing soft nucleophilic heteroatoms. Able to oxidize drug molecules bearing a carbonyl group on an aliphatic chain, such as nabumetone and pentoxifylline. Also, in the absence of substrates, shows slow but yet significant NADPH oxidase activity. Acts as a positive modulator of cholesterol biosynthesis as well as glucose homeostasis, promoting metabolic aging via pleiotropic effects. The chain is Flavin-containing monooxygenase 5 from Rattus norvegicus (Rat).